Consider the following 69-residue polypeptide: Large ribosomal subunit protein uL29 (69 aa).

The protein belongs to the universal ribosomal protein uL29 family.

This chain is Large ribosomal subunit protein uL29, found in Granulibacter bethesdensis (strain ATCC BAA-1260 / CGDNIH1).